A 655-amino-acid chain; its full sequence is Ubiquilin-3 (655 aa).

The 77-residue stretch at Ile22–Met98 folds into the Ubiquitin-like domain. The segment at Cys102–Tyr124 is disordered. Residues Gln110 to Ser122 are compositionally biased toward low complexity. Positions Asn194–Met233 constitute an STI1 domain. Disordered regions lie at residues Pro277–Arg330, Ala364–Glu399, and Phe412–Gly447. Residues Ala279–Thr290 show a composition bias toward low complexity. Basic and acidic residues predominate over residues Gly318–Arg330. The span at Val377 to Pro395 shows a compositional bias: low complexity. The segment covering Lys432–Leu441 has biased composition (polar residues). A UBA domain is found at Gln609–Ser655.

Testis specific.

The sequence is that of Ubiquilin-3 (UBQLN3) from Homo sapiens (Human).